We begin with the raw amino-acid sequence, 366 residues long: MSIVVQSAVTHFRPVMILAGGTGGHIFPGLAVAGALRARGVPVVWLGATGKMETHLVPKHGIEIQTIAVAGVRGRGMLALLGAPVRVLRAIFAAMGVLRRYRPRVVVSFGGFAAGPGGIAARFMRLPLIVHEQNRAPGMTNRVLARVAKRVLSGFPGSFVAEEVVGNPVRKDIAGLPAPGVRFSGRSGPVRLLVLGGSQGARVMNDALPVVLRVLSDSDVAVEVRHQCGEALCAETERAYAYAGVAARIEPFISDMAAAYAWADLVVCRAGASTLAELCAAGVGSVLIPFPAAVDDHQTRNAEYLVAAGAALLLQQDRALYVYLESVLRDLLSDPMRRLAMAEAARGLAKSDAAECIAEIVLEESI.

UDP-N-acetyl-alpha-D-glucosamine-binding positions include 22–24, N134, R170, S198, I253, and Q298; that span reads TGG.

It belongs to the glycosyltransferase 28 family. MurG subfamily.

It localises to the cell inner membrane. It catalyses the reaction di-trans,octa-cis-undecaprenyl diphospho-N-acetyl-alpha-D-muramoyl-L-alanyl-D-glutamyl-meso-2,6-diaminopimeloyl-D-alanyl-D-alanine + UDP-N-acetyl-alpha-D-glucosamine = di-trans,octa-cis-undecaprenyl diphospho-[N-acetyl-alpha-D-glucosaminyl-(1-&gt;4)]-N-acetyl-alpha-D-muramoyl-L-alanyl-D-glutamyl-meso-2,6-diaminopimeloyl-D-alanyl-D-alanine + UDP + H(+). The protein operates within cell wall biogenesis; peptidoglycan biosynthesis. Cell wall formation. Catalyzes the transfer of a GlcNAc subunit on undecaprenyl-pyrophosphoryl-MurNAc-pentapeptide (lipid intermediate I) to form undecaprenyl-pyrophosphoryl-MurNAc-(pentapeptide)GlcNAc (lipid intermediate II). In Xylella fastidiosa (strain M12), this protein is UDP-N-acetylglucosamine--N-acetylmuramyl-(pentapeptide) pyrophosphoryl-undecaprenol N-acetylglucosamine transferase.